The following is a 626-amino-acid chain: Probable potassium transport system protein Kup (626 aa).

The next 13 membrane-spanning stretches (helical) occupy residues 8 to 28 (VALP…IGTS), 44 to 64 (ISEA…TLSI), 102 to 122 (IYLI…GIIT), 139 to 159 (PAFD…LFMV), 171 to 191 (FGPI…YSII), 196 to 216 (ILWF…PFVA), 217 to 237 (FVAM…YADM), 249 to 269 (WFIV…ALLL), 281 to 301 (LLVP…AAVI), 339 to 359 (IYVP…IILF), 377 to 397 (MLCV…WPWW), 399 to 419 (VTLF…STSL), and 421 to 441 (ILSG…ILMT).

This sequence belongs to the HAK/KUP transporter (TC 2.A.72) family.

Its subcellular location is the cell inner membrane. The catalysed reaction is K(+)(in) + H(+)(in) = K(+)(out) + H(+)(out). In terms of biological role, transport of potassium into the cell. Likely operates as a K(+):H(+) symporter. In Acinetobacter baylyi (strain ATCC 33305 / BD413 / ADP1), this protein is Probable potassium transport system protein Kup.